Consider the following 343-residue polypeptide: Protein RecA (343 aa).

Belongs to the RecA family.

The protein resides in the cytoplasm. Its function is as follows. Can catalyze the hydrolysis of ATP in the presence of single-stranded DNA, the ATP-dependent uptake of single-stranded DNA by duplex DNA, and the ATP-dependent hybridization of homologous single-stranded DNAs. It interacts with LexA causing its activation and leading to its autocatalytic cleavage. In Coxiella burnetii (strain RSA 493 / Nine Mile phase I), this protein is Protein RecA.